The primary structure comprises 504 residues: Maturase K (504 aa).

It belongs to the intron maturase 2 family. MatK subfamily.

It is found in the plastid. The protein localises to the chloroplast. Its function is as follows. Usually encoded in the trnK tRNA gene intron. Probably assists in splicing its own and other chloroplast group II introns. The chain is Maturase K from Wollastonia biflora (Beach sunflower).